Consider the following 863-residue polypeptide: Paramyosin (863 aa).

Positions 1–26 (MSESHVKISRTIIRGTSPSTVRLESP) are nonhelical region. Residues 27-836 (VRELEDLLDL…ERTITIKRTI (810 aa)) adopt a coiled-coil conformation. The interval 837 to 863 (GGPGSRAVSVVREINSVSRGNRATSIM) is nonhelical region.

It belongs to the paramyosin family. As to quaternary structure, homodimer.

It localises to the cytoplasm. The protein localises to the myofibril. Its function is as follows. Paramyosin is a major structural component of many thick filaments isolated from invertebrate muscles. This is Paramyosin from Echinococcus granulosus (Hydatid tapeworm).